Reading from the N-terminus, the 159-residue chain is Protein Smg homolog (159 aa).

Belongs to the Smg family.

In Vibrio vulnificus (strain CMCP6), this protein is Protein Smg homolog.